Here is a 140-residue protein sequence, read N- to C-terminus: Small ribosomal subunit protein uS12m (140 aa).

Belongs to the universal ribosomal protein uS12 family.

Its subcellular location is the mitochondrion. This Dictyostelium citrinum (Slime mold) protein is Small ribosomal subunit protein uS12m (mrps12).